A 263-amino-acid chain; its full sequence is Small ribosomal subunit protein uS3 (263 aa).

The region spanning Ile-40 to Glu-108 is the KH type-2 domain. The interval Lys-224–Glu-263 is disordered. Positions Lys-239 to Asn-248 are enriched in basic and acidic residues. The span at Lys-249–Glu-263 shows a compositional bias: low complexity.

The protein belongs to the universal ribosomal protein uS3 family. Part of the 30S ribosomal subunit. Forms a tight complex with proteins S10 and S14.

Its function is as follows. Binds the lower part of the 30S subunit head. Binds mRNA in the 70S ribosome, positioning it for translation. This Mycoplasmoides gallisepticum (strain R(low / passage 15 / clone 2)) (Mycoplasma gallisepticum) protein is Small ribosomal subunit protein uS3.